The primary structure comprises 147 residues: Hemoglobin subunit beta (147 aa).

Position 2 is an N-acetylvaline (Val2). In terms of domain architecture, Globin spans 3 to 147; the sequence is HLSAEEKEAV…VANALAHKYH (145 aa). Ser45 bears the Phosphoserine mark. Lys60 is subject to N6-acetyllysine. A heme b-binding site is contributed by His64. Position 83 is an N6-acetyllysine (Lys83). His93 provides a ligand contact to heme b. S-nitrosocysteine is present on Cys94. The residue at position 145 (Lys145) is an N6-acetyllysine.

The protein belongs to the globin family. As to quaternary structure, heterotetramer of two alpha chains and two beta chains. Red blood cells.

Functionally, involved in oxygen transport from the lung to the various peripheral tissues. The sequence is that of Hemoglobin subunit beta (HBB) from Sus scrofa (Pig).